We begin with the raw amino-acid sequence, 524 residues long: Thermosome subunit 3 (524 aa).

The protein belongs to the TCP-1 chaperonin family. As to quaternary structure, the thermosome or CCT complex is a oligomeric complex of two octameric double-ring structures; the complex is probably a heterooligomer of CCT1, CCT2 and CCT3 with yet unknown stoichiometry.

Molecular chaperone that assists in the folding or refolding of nascent or denatured proteins along with ATP hydrolysis. ATPase activity is highest in thermosome assemblies containing CCT1:CCT2, followed by assemblies containing CCT1:CCT2:CCT3. Not required for thermosome ATPase activity. Not required for growth. The protein is Thermosome subunit 3 (cct3) of Haloferax volcanii (strain ATCC 29605 / DSM 3757 / JCM 8879 / NBRC 14742 / NCIMB 2012 / VKM B-1768 / DS2) (Halobacterium volcanii).